A 145-amino-acid polypeptide reads, in one-letter code: NADH-quinone oxidoreductase subunit A 1 (145 aa).

Helical transmembrane passes span 18 to 38 (ILPLGLYVAATVLLIGILLLA), 71 to 91 (VPFYLVAIFFIVFDVEAVFIF), and 104 to 124 (GLIHITAFIIVLLLGLVWLWL).

This sequence belongs to the complex I subunit 3 family. In terms of assembly, NDH-1 is composed of 14 different subunits. Subunits NuoA, H, J, K, L, M, N constitute the membrane sector of the complex.

It is found in the cell inner membrane. The catalysed reaction is a quinone + NADH + 5 H(+)(in) = a quinol + NAD(+) + 4 H(+)(out). Functionally, NDH-1 shuttles electrons from NADH, via FMN and iron-sulfur (Fe-S) centers, to quinones in the respiratory chain. The immediate electron acceptor for the enzyme in this species is believed to be ubiquinone. Couples the redox reaction to proton translocation (for every two electrons transferred, four hydrogen ions are translocated across the cytoplasmic membrane), and thus conserves the redox energy in a proton gradient. This Geotalea uraniireducens (strain Rf4) (Geobacter uraniireducens) protein is NADH-quinone oxidoreductase subunit A 1.